Reading from the N-terminus, the 890-residue chain is MKPTQFGGSSSKMTEPIEYVTLISDDSDGEPTPKRNVNHPPSALSAPNPGQKQKHPDEDSNDAPATSDERRTSRRNRPKVDYSNRPSGSGDTASNDKSGSASMGPNNQQAERRSQSQTRKSEANATSSSVSGPSAGNSRPSQNGDSKDRDAGTPTVLSGQEGAVFQSRLPFNKMTPNEEACFPDISRSGILGHRVFLNIRNSLLHMWVDNPKIQLSFEIALKNLPPPFDSEPSLVRRVHSFLERHGFINFGIFKRLKPIPAKKLGKVIVIGAGISGLAVAHQLQQFGMDVIVLEARDRVGGRISTFRKNSYIADVGAMVVTGVYGNPMTILSKQIGMDLVPIQQTCPLYGPDGKPVPKEKDDVIEREFNRLLESASYLSHRLDFNYAGDCPVSLGDALEWIISMQEMQVMHKRGQHMQEIIATQTKIIEQRRRLKTLRDTIGKLKNEHLAMINQRKPKGTDGDLKYCYQEFNIRNTQIKMEETISTFHDLHAEEKQMLAKLHELEQNRPSDVYLSSRDRLILDWHFANLEFANATRLNNLSLKHWDQDDDFEFIGHHTTVRNGYSCVPVALTENLDIRVNSAVKEIKYGTKGVEVVAENLKTSNSQMTYKADLVVCTLTLGVLKVAVAHKESQQSNTVKFDPPLPDWKQQAIKRLGFGNLNKVVLCFDRIFWDPNANLFGHVGSTTASRGEMFLFWSISSSPVLLALVAGMAANLVESVTDDIIIGRCMSVLKNIFGNTSVPQPKETVVTRWRSDPWARGSYSYVSVGSSGSDYDLLAAPVIPPSSKDAEGLPRLFFAGEHTIRNYPATVHGAYLSGLREAGRIADYYLGYPEGTPPDIGYSVAEAANLVSVGNVVKLRDLSPNLSDSSPSSKKSEENSNSNTADSTELQ.

A compositionally biased stretch (polar residues) spans 1 to 13 (MKPTQFGGSSSKM). The interval 1–164 (MKPTQFGGSS…TVLSGQEGAV (164 aa)) is disordered. 2 positions are modified to phosphoserine: S24 and S27. Residues 84-109 (NRPSGSGDTASNDKSGSASMGPNNQQ) are compositionally biased toward polar residues. Positions 110-122 (AERRSQSQTRKSE) are enriched in basic and acidic residues. Low complexity predominate over residues 123–138 (ANATSSSVSGPSAGNS). The region spanning 160 to 259 (QEGAVFQSRL…FGIFKRLKPI (100 aa)) is the SWIRM domain. 267-295 (VIVIGAGISGLAVAHQLQQFGMDVIVLEA) contributes to the FAD binding site. The segment at 860–890 (DLSPNLSDSSPSSKKSEENSNSNTADSTELQ) is disordered. A compositionally biased stretch (low complexity) spans 861-882 (LSPNLSDSSPSSKKSEENSNSN). Residue S866 is modified to Phosphoserine.

The protein belongs to the flavin monoamine oxidase family. In terms of assembly, component of a complex that contains at least HDAC1/Rpd3, CoRest and Su(var)3-3/Hdm. The cofactor is FAD.

Its subcellular location is the nucleus. It localises to the chromosome. Its function is as follows. Probable histone demethylase that specifically demethylates 'Lys-4' of histone H3, a specific tag for epigenetic transcriptional activation, thereby acting as a corepressor. Required for heterochromatic gene silencing. Acts by oxidizing the substrate by FAD to generate the corresponding imine that is subsequently hydrolyzed. Demethylates both mono- and tri-methylated 'Lys-4' of histone H3. May also demethylate 'Lys-9' of histone H3, Plays a role in the repression of neuronal genes. The chain is Possible lysine-specific histone demethylase 1 (Su(var)3-3) from Drosophila melanogaster (Fruit fly).